Here is a 346-residue protein sequence, read N- to C-terminus: Glycosyltransferase 1 domain-containing protein 1 (346 aa).

The N-terminal stretch at 1 to 16 (MRLLFLAVLRPHTGNA) is a signal peptide.

The protein belongs to the glycosyltransferase group 1 family. Glycosyltransferase 4 subfamily.

The protein resides in the secreted. The sequence is that of Glycosyltransferase 1 domain-containing protein 1 (GLT1D1) from Homo sapiens (Human).